A 408-amino-acid polypeptide reads, in one-letter code: Peptidase T (408 aa).

H78 is a Zn(2+) binding site. Residue D80 is part of the active site. Residue D140 participates in Zn(2+) binding. E173 functions as the Proton acceptor in the catalytic mechanism. Residues E174, D196, and H379 each contribute to the Zn(2+) site.

This sequence belongs to the peptidase M20B family. It depends on Zn(2+) as a cofactor.

The protein localises to the cytoplasm. The catalysed reaction is Release of the N-terminal residue from a tripeptide.. Cleaves the N-terminal amino acid of tripeptides. This is Peptidase T from Citrobacter koseri (strain ATCC BAA-895 / CDC 4225-83 / SGSC4696).